A 122-amino-acid polypeptide reads, in one-letter code: T cell receptor gamma variable 9 (122 aa).

The signal sequence occupies residues 1-20 (MLSLLHTSTLAVLGALCVYG). An Ig-like domain is found at 27–122 (PQISSTKTLS…ATYYCALWEV (96 aa)). Cys-43 and Cys-117 are oxidised to a cystine.

As to quaternary structure, gamma-delta TR is a heterodimer composed of a gamma and delta chain; disulfide-linked. The gamma-delta TR is associated with the transmembrane signaling CD3 coreceptor proteins following the stoichiometry: a single gamma-delta TR heterodimer associates with one CD3D-CD3E heterodimer, one CD3G-CD3E heterodimer and one CD247 homodimer forming a stable octameric structure. Upon activation, gamma-delta TR complex associates with FCER1G to initiate intracellular signaling.

It is found in the cell membrane. V region of the variable domain of T cell receptor (TR) gamma chain that participates in the antigen recognition. Gamma-delta TRs recognize a variety of self and foreign non-peptide antigens frequently expressed at the epithelial boundaries between the host and external environment, including endogenous lipids presented by MH-like protein CD1D and phosphoantigens presented by butyrophilin-like molecule BTN3A1. Upon antigen recognition induces rapid, innate-like immune responses involved in pathogen clearance and tissue repair. Binding of gamma-delta TR complex to antigen triggers phosphorylation of immunoreceptor tyrosine-based activation motifs (ITAMs) in the CD3 chains by the LCK and FYN kinases, allowing the recruitment, phosphorylation, and activation of ZAP70 that facilitates phosphorylation of the scaffolding proteins LCP2 and LAT. This lead to the formation of a supramolecular signalosome that recruits the phospholipase PLCG1, resulting in calcium mobilization and ERK activation, ultimately leading to T cell expansion and differentiation into effector cells. Gamma-delta TRs are produced through somatic rearrangement of a limited repertoire of variable (V), diversity (D), and joining (J) genes. The potential diversity of gamma-delta TRs is conferred by the unique ability to rearrange (D) genes in tandem and to utilize all three reading frames. The combinatorial diversity is considerably increased by the sequence exonuclease trimming and random nucleotide (N) region additions which occur during the V-(D)-J rearrangements. This is T cell receptor gamma variable 9 from Homo sapiens (Human).